A 316-amino-acid chain; its full sequence is Beta-ketoacyl-[acyl-carrier-protein] synthase III (316 aa).

Active-site residues include Cys-112 and His-243. Residues 244-248 (QANLR) form an ACP-binding region. Residue Asn-273 is part of the active site.

Belongs to the thiolase-like superfamily. FabH family. As to quaternary structure, homodimer.

Its subcellular location is the cytoplasm. It carries out the reaction malonyl-[ACP] + acetyl-CoA + H(+) = 3-oxobutanoyl-[ACP] + CO2 + CoA. It functions in the pathway lipid metabolism; fatty acid biosynthesis. Its function is as follows. Catalyzes the condensation reaction of fatty acid synthesis by the addition to an acyl acceptor of two carbons from malonyl-ACP. Catalyzes the first condensation reaction which initiates fatty acid synthesis and may therefore play a role in governing the total rate of fatty acid production. Possesses both acetoacetyl-ACP synthase and acetyl transacylase activities. Its substrate specificity determines the biosynthesis of branched-chain and/or straight-chain of fatty acids. The protein is Beta-ketoacyl-[acyl-carrier-protein] synthase III of Yersinia pseudotuberculosis serotype O:1b (strain IP 31758).